The sequence spans 452 residues: 1-aminocyclopropane-1-carboxylate synthase 3 (452 aa).

Position 283 is an N6-(pyridoxal phosphate)lysine (Lys283).

It belongs to the class-I pyridoxal-phosphate-dependent aminotransferase family. Pyridoxal 5'-phosphate is required as a cofactor. In terms of tissue distribution, expressed in leaves. Expressed in roots and leaf blades. Expressed at low levels in leaf sheaths and shoot bases.

The enzyme catalyses S-adenosyl-L-methionine = 1-aminocyclopropane-1-carboxylate + S-methyl-5'-thioadenosine + H(+). The protein operates within alkene biosynthesis; ethylene biosynthesis via S-adenosyl-L-methionine; ethylene from S-adenosyl-L-methionine: step 1/2. Its function is as follows. Catalyzes the formation of 1-aminocyclopropane-1-carboxylate, a direct precursor of ethylene in higher plants. In Oryza sativa subsp. japonica (Rice), this protein is 1-aminocyclopropane-1-carboxylate synthase 3.